We begin with the raw amino-acid sequence, 534 residues long: UDP-glucuronosyltransferase 2A3 (534 aa).

An N-terminal signal peptide occupies residues 1–18 (MVSEKCVAAFFLLQLCWA). Residues 19-493 (GCGFCSKVLV…SWFQYHSLDV (475 aa)) are Extracellular-facing. N-linked (GlcNAc...) asparagine glycosylation occurs at Asn102. Lys135 carries the post-translational modification N6-succinyllysine. N-linked (GlcNAc...) asparagine glycosylation is present at Asn204. A helical membrane pass occupies residues 494–514 (IGFLLLCVVTLTFIITKFCLF). At 515–534 (VCQKLYMKESKKMGNRKKKN) the chain is on the cytoplasmic side.

It belongs to the UDP-glycosyltransferase family. As to expression, highly expressed in liver, with lower levels in duodenum and jejunum.

Its subcellular location is the membrane. The enzyme catalyses glucuronate acceptor + UDP-alpha-D-glucuronate = acceptor beta-D-glucuronoside + UDP + H(+). Its function is as follows. UDP-glucuronosyltransferases catalyze phase II biotransformation reactions in which lipophilic substrates are conjugated with glucuronic acid to increase water solubility and enhance excretion. They are of major importance in the conjugation and subsequent elimination of potentially toxic xenobiotics and endogenous compounds. The sequence is that of UDP-glucuronosyltransferase 2A3 (Ugt2a3) from Mus musculus (Mouse).